The following is a 526-amino-acid chain: PTS system alpha-glucoside-specific EIICB component (526 aa).

The 417-residue stretch at 1–417 (MLKHFQRLGG…YNVKTSGRED (417 aa)) folds into the PTS EIIC type-1 domain. Helical transmembrane passes span 12 to 32 (LFAPVLLFPFAGLVVALTIIL), 59 to 79 (GWTVFRQLPLIFAIGLPIGLA), 88 to 108 (LAVLATYLTYNYFISAILTFW), 132 to 152 (IKTLDTSIVGAIVISGITIYI), 173 to 193 (LVSAIAFVVMIPCAYITCLVW), 200 to 220 (ISSLQALMVTSGTFGVWLYTF), 224 to 244 (ILIPTGLHHFIYGPFIFGPAV), 274 to 294 (GGFALHGNSKIFGCIGIALAM), 305 to 325 (IVSGLLIPAALTAALVGITEP), 330 to 350 (FLFIAPFLFVVHAVLAATMAA), 355 to 375 (FGVVKYGSGIIEIAALNWLPL), and 381 to 401 (GVMFTQLAIGVVFIGIHYLVF). Residues 447-526 (SGKAKAFLEA…ESFENLMEQN (80 aa)) enclose the PTS EIIB type-1 domain. C469 functions as the Phosphocysteine intermediate; for EIIB activity in the catalytic mechanism.

The protein resides in the cell membrane. Functionally, the phosphoenolpyruvate-dependent sugar phosphotransferase system (sugar PTS), a major carbohydrate active -transport system, catalyzes the phosphorylation of incoming sugar substrates concomitantly with their translocation across the cell membrane. This system is involved in alpha-glucoside transport. This chain is PTS system alpha-glucoside-specific EIICB component (malB), found in Fusobacterium mortiferum.